A 699-amino-acid polypeptide reads, in one-letter code: UvrABC system protein C (699 aa).

Positions 1 to 51 are enriched in low complexity; that stretch reads MIQHPTDTPEVAADAAAEPERAAGAAGATPQPSQDAVEPAADVDAATASLA. Residues 1-59 are disordered; the sequence is MIQHPTDTPEVAADAAAEPERAAGAAGATPQPSQDAVEPAADVDAATASLAAEDDDEPV. One can recognise a GIY-YIG domain in the interval 92–170; it reads TSPGVYRMLN…IKQLRPRFNV (79 aa). Positions 280–315 constitute a UVR domain; the sequence is RLVKQELAGEMEKASAELEFETAALYRDRLAALSAI.

The protein belongs to the UvrC family. In terms of assembly, interacts with UvrB in an incision complex.

It is found in the cytoplasm. In terms of biological role, the UvrABC repair system catalyzes the recognition and processing of DNA lesions. UvrC both incises the 5' and 3' sides of the lesion. The N-terminal half is responsible for the 3' incision and the C-terminal half is responsible for the 5' incision. This is UvrABC system protein C from Rhodopseudomonas palustris (strain BisB18).